We begin with the raw amino-acid sequence, 412 residues long: Imidazolonepropionase (412 aa).

Fe(3+) is bound by residues His76 and His78. 2 residues coordinate Zn(2+): His76 and His78. The 4-imidazolone-5-propanoate site is built by Arg85, Tyr148, and His181. Tyr148 is a binding site for N-formimidoyl-L-glutamate. His242 lines the Fe(3+) pocket. Position 242 (His242) interacts with Zn(2+). Glu245 contributes to the 4-imidazolone-5-propanoate binding site. Residue Asp317 coordinates Fe(3+). Position 317 (Asp317) interacts with Zn(2+). N-formimidoyl-L-glutamate is bound by residues Asn319 and Gly321. Ser322 is a binding site for 4-imidazolone-5-propanoate.

This sequence belongs to the metallo-dependent hydrolases superfamily. HutI family. The cofactor is Zn(2+). Fe(3+) is required as a cofactor.

The protein localises to the cytoplasm. It catalyses the reaction 4-imidazolone-5-propanoate + H2O = N-formimidoyl-L-glutamate. It functions in the pathway amino-acid degradation; L-histidine degradation into L-glutamate; N-formimidoyl-L-glutamate from L-histidine: step 3/3. Its function is as follows. Catalyzes the hydrolytic cleavage of the carbon-nitrogen bond in imidazolone-5-propanoate to yield N-formimidoyl-L-glutamate. It is the third step in the universal histidine degradation pathway. This is Imidazolonepropionase from Staphylococcus aureus (strain bovine RF122 / ET3-1).